Reading from the N-terminus, the 288-residue chain is Large ribosomal subunit protein uL2 (288 aa).

Disordered regions lie at residues Met-1–Tyr-46 and Met-226–Lys-288. Residues Asn-235–Arg-248 show a composition bias toward gly residues. The segment covering His-279–Lys-288 has biased composition (basic residues).

Belongs to the universal ribosomal protein uL2 family. Part of the 50S ribosomal subunit. Forms a bridge to the 30S subunit in the 70S ribosome.

Its function is as follows. One of the primary rRNA binding proteins. Required for association of the 30S and 50S subunits to form the 70S ribosome, for tRNA binding and peptide bond formation. It has been suggested to have peptidyltransferase activity; this is somewhat controversial. Makes several contacts with the 16S rRNA in the 70S ribosome. This Opitutus terrae (strain DSM 11246 / JCM 15787 / PB90-1) protein is Large ribosomal subunit protein uL2.